We begin with the raw amino-acid sequence, 399 residues long: Succinate--CoA ligase [ADP-forming] subunit beta (399 aa).

An ATP-grasp domain is found at 9 to 254 (KAVLAEFGVA…ESEEDPKEIE (246 aa)). ATP is bound by residues Lys-46, 53–55 (GRG), Glu-109, Ala-112, and Glu-117. The Mg(2+) site is built by Asn-209 and Asp-223. Substrate-binding positions include Asn-274 and 331–333 (GIM).

This sequence belongs to the succinate/malate CoA ligase beta subunit family. Heterotetramer of two alpha and two beta subunits. The cofactor is Mg(2+).

It catalyses the reaction succinate + ATP + CoA = succinyl-CoA + ADP + phosphate. The enzyme catalyses GTP + succinate + CoA = succinyl-CoA + GDP + phosphate. It participates in carbohydrate metabolism; tricarboxylic acid cycle; succinate from succinyl-CoA (ligase route): step 1/1. Its function is as follows. Succinyl-CoA synthetase functions in the citric acid cycle (TCA), coupling the hydrolysis of succinyl-CoA to the synthesis of either ATP or GTP and thus represents the only step of substrate-level phosphorylation in the TCA. The beta subunit provides nucleotide specificity of the enzyme and binds the substrate succinate, while the binding sites for coenzyme A and phosphate are found in the alpha subunit. This Phenylobacterium zucineum (strain HLK1) protein is Succinate--CoA ligase [ADP-forming] subunit beta.